The primary structure comprises 618 residues: Structural protein ORF618 (618 aa).

The stretch at 570 to 598 forms a coiled coil; sequence ILEAKRQIEDRAKGLSKNLDNTVTEIMNA.

Its subcellular location is the virion. This is Structural protein ORF618 from Acidianus two-tailed virus (ATV).